A 494-amino-acid chain; its full sequence is Aspartyl/glutamyl-tRNA(Asn/Gln) amidotransferase subunit B (494 aa).

The protein belongs to the GatB/GatE family. GatB subfamily. As to quaternary structure, heterotrimer of A, B and C subunits.

It carries out the reaction L-glutamyl-tRNA(Gln) + L-glutamine + ATP + H2O = L-glutaminyl-tRNA(Gln) + L-glutamate + ADP + phosphate + H(+). The catalysed reaction is L-aspartyl-tRNA(Asn) + L-glutamine + ATP + H2O = L-asparaginyl-tRNA(Asn) + L-glutamate + ADP + phosphate + 2 H(+). Functionally, allows the formation of correctly charged Asn-tRNA(Asn) or Gln-tRNA(Gln) through the transamidation of misacylated Asp-tRNA(Asn) or Glu-tRNA(Gln) in organisms which lack either or both of asparaginyl-tRNA or glutaminyl-tRNA synthetases. The reaction takes place in the presence of glutamine and ATP through an activated phospho-Asp-tRNA(Asn) or phospho-Glu-tRNA(Gln). In Synechococcus sp. (strain WH7803), this protein is Aspartyl/glutamyl-tRNA(Asn/Gln) amidotransferase subunit B.